Consider the following 343-residue polypeptide: Labda-7,13(16),14-triene synthase (343 aa).

Residues D114 and E119 each contribute to the Mg(2+) site. The DDXXXE motif motif lies at 114–119 (DDVHVE). R206 serves as a coordination point for substrate. 3 residues coordinate Mg(2+): N252, S256, and E260. The NXXXSXXXE motif signature appears at 252–260 (NDLYSFAYE).

Belongs to the terpene synthase family. Requires Mg(2+) as cofactor.

The enzyme catalyses (13E)-labda-7,13-dien-15-yl diphosphate = labda-7,13(16),14-triene + diphosphate. In terms of biological role, involved in the biosynthesis of the labdane-type bicyclic diterpene labda-7,13(16),14-triene. Catalyzes the conversion of labda-7,13(E)-dienyl diphosphate to yield labda-7,13(16),14-triene. The polypeptide is Labda-7,13(16),14-triene synthase (Streptomyces clavuligerus).